Consider the following 860-residue polypeptide: Leucine--tRNA ligase (860 aa).

A 'HIGH' region motif is present at residues 42 to 52 (PYPSGRLHMGH). Residues 619 to 623 (KMSKS) carry the 'KMSKS' region motif. Lys622 contacts ATP.

The protein belongs to the class-I aminoacyl-tRNA synthetase family.

Its subcellular location is the cytoplasm. It catalyses the reaction tRNA(Leu) + L-leucine + ATP = L-leucyl-tRNA(Leu) + AMP + diphosphate. In Serratia proteamaculans (strain 568), this protein is Leucine--tRNA ligase.